Consider the following 878-residue polypeptide: Leucine--tRNA ligase (878 aa).

Residues 43 to 53 (PYPSGRIHIGH) carry the 'HIGH' region motif. Positions 630 to 634 (KMSKS) match the 'KMSKS' region motif. An ATP-binding site is contributed by Lys-633.

This sequence belongs to the class-I aminoacyl-tRNA synthetase family.

It is found in the cytoplasm. It carries out the reaction tRNA(Leu) + L-leucine + ATP = L-leucyl-tRNA(Leu) + AMP + diphosphate. The chain is Leucine--tRNA ligase from Nitrobacter hamburgensis (strain DSM 10229 / NCIMB 13809 / X14).